The following is a 1323-amino-acid chain: Glutamate receptor ionotropic, NMDA 2D (1323 aa).

A signal peptide spans 1–27 (MRGAGGPRGPRGPAKMLLLLALACASP). Residues 28 to 579 (FPEEVPGPGA…SPSAFLEPYS (552 aa)) are Extracellular-facing. N89 carries N-linked (GlcNAc...) asparagine glycosylation. The cysteines at positions 101 and 345 are disulfide-linked. N-linked (GlcNAc...) asparagine glycosylation is found at N349, N363, N381, and N464. 2 cysteine pairs are disulfide-bonded: C452–C480 and C459–C481. L-glutamate-binding residues include S536, T538, and R543. N566 carries N-linked (GlcNAc...) asparagine glycosylation. Residues 580–601 (PAVWVMMFVMCLTVVAVTVFIF) form a helical membrane-spanning segment. Topologically, residues 602–626 (EYLSPVGYNRSLATGKRPGGSTFTI) are cytoplasmic. Residues 627–638 (GKSIWLLWALVF) constitute an intramembrane region (discontinuously helical). Residues 628–647 (KSIWLLWALVFNNSVPVENP) are pore-forming. The Cytoplasmic portion of the chain corresponds to 639–650 (NNSVPVENPRGT). A helical membrane pass occupies residues 651 to 671 (TSKIMVLVWAFFAVIFLASYT). Residues 672–840 (ANLAAFMIQE…EVMSSKLDID (169 aa)) lie on the Extracellular side of the membrane. N712 carries an N-linked (GlcNAc...) asparagine glycan. Positions 714, 715, and 756 each coordinate L-glutamate. A disulfide bond links C770 and C825. Residues 841 to 864 (NMAGVFYMLLVAMGLSLLVFAWEH) traverse the membrane as a helical segment. At 865-1323 (LVYWRLRHCL…AHFSSLESEV (459 aa)) the chain is on the cytoplasmic side. Disordered stretches follow at residues 897 to 952 (EAAP…PGGA), 977 to 1112 (AAPR…SLGG), and 1201 to 1323 (PWAA…ESEV). Residues 899 to 929 (APPPAKPPPPPQPLPSPAYPAARPPPGPAPF) show a composition bias toward pro residues. Over residues 931–940 (PRERAAADRW) the composition is skewed to basic and acidic residues. Low complexity predominate over residues 977–986 (AAPRGAAGRP). Positions 987 to 1001 (LSPPTTQPPQKPPPS) are enriched in pro residues. Positions 1030–1039 (AAAAAAVGPP) are enriched in low complexity. Pro residues predominate over residues 1080 to 1092 (TAPPPRRAAPPPC). Over residues 1208 to 1228 (PRRRARCGCPRPHPHRPRASH) the composition is skewed to basic residues. At R1303 the chain carries Omega-N-methylarginine. S1313 is subject to Phosphoserine. The short motif at 1321 to 1323 (SEV) is the PDZ-binding element.

This sequence belongs to the glutamate-gated ion channel (TC 1.A.10.1) family. NR2D/GRIN2D subfamily. Heterotetramer. Forms heterotetrameric channels composed of two GluN1/zeta subunits (GRIN1), and two identical GluN2/epsilon subunits (GRIN2A, GRIN2B, GRIN2C or GRIN2D) or GluN3 subunits (GRIN3A or GRIN3B) (in vitro). In vivo, the subunit composition may depend on the expression levels of the different subunits. Interacts with PDZ domains of PATJ and DLG4. In terms of tissue distribution, detected in neonate brain synaptosomes (at protein level).

Its subcellular location is the cell membrane. The protein resides in the postsynaptic cell membrane. It carries out the reaction Ca(2+)(in) = Ca(2+)(out). It catalyses the reaction Na(+)(in) = Na(+)(out). The enzyme catalyses K(+)(in) = K(+)(out). Functionally, component of N-methyl-D-aspartate (NMDA) receptors (NMDARs) that function as heterotetrameric, ligand-gated cation channels with high calcium permeability and voltage-dependent block by Mg(2+). Participates in synaptic plasticity for learning and memory formation. Channel activation requires binding of the neurotransmitter L-glutamate to the GluN2 subunit, glycine or D-serine binding to the GluN1 subunit, plus membrane depolarization to eliminate channel inhibition by Mg(2+). NMDARs mediate simultaneously the potasium efflux and the influx of calcium and sodium. Each GluN2 subunit confers differential attributes to channel properties, including activation, deactivation and desensitization kinetics, pH sensitivity, Ca2(+) permeability, and binding to allosteric modulators. This Mus musculus (Mouse) protein is Glutamate receptor ionotropic, NMDA 2D.